Reading from the N-terminus, the 548-residue chain is 5-epi-aristolochene synthase (548 aa).

(2E,6E)-farnesyl diphosphate is bound by residues arginine 264, aspartate 301, aspartate 305, arginine 441, and aspartate 444. Aspartate 301 and aspartate 305 together coordinate Mg(2+). The DDXXD motif signature appears at 301–305; that stretch reads DDTFD. Mg(2+) is bound by residues aspartate 444, aspartate 445, threonine 448, and glutamate 452.

It belongs to the terpene synthase family. In terms of assembly, monomer. Requires Mg(2+) as cofactor. Self-alkylated at Tyr-520 in the presence of (2Z,6E)-farnesyl diphosphate ((Z,E)-FPP). Self-alkylated at Asp-444 at warm temperature (42 degrees Celsius) in the presence of (2E,6E)-farnesyl diphosphate ((E,E)-FPP).

The protein resides in the cytoplasm. The catalysed reaction is (2E,6E)-farnesyl diphosphate = (+)-5-epi-aristolochene + diphosphate. It carries out the reaction (2Z,6E)-farnesyl diphosphate = (+)-2-epi-prezizaene + diphosphate. The enzyme catalyses (2Z,6E)-farnesyl diphosphate = (-)-alpha-cedrene + diphosphate. It catalyses the reaction (2Z,6E)-farnesyl diphosphate = (-)-beta-curcumene + diphosphate. The protein operates within secondary metabolite biosynthesis; terpenoid biosynthesis. Inhibited activity toward farnesyl diphosphate (FPP) by anilinogeranyl diphosphate (AGPP); AGPP undergoes a cyclization event leading to the formation of a novel macrocyclic paracyclophane alkaloid. Repressed by sesquilavandulyl diphosphate (SPP) via the induction of self-alkyation. Its function is as follows. Catalyzes the cyclization of trans,trans-farnesyl diphosphate (FPP) to the bicyclic intermediate 5-epi-aristolochene, initial step in the conversion of FPP to the sesquiterpenoid antifungal phytoalexin capsidiol. Produces germacrene A as an enzyme-bound intermediate that is not released by the enzyme, but is further cyclized to produce the bicyclic 5-epi-aristolochene. Mediates, at low levels, the formation of 4-epi-eremophilene and premnaspirodiene from trans,trans-farnesyl diphosphate. Also mediates the conversion of cis,trans-farnesyl diphosphate to cisoid minor products such as (+)-2-epi-prezizaene, (-)-alpha-cedrene and, to a lesser extent, (-)-beta-curcumene; also produces, at low levels, alpha-acoradiene and 4-epi-alpha-acoradiene, but barely nerolidol, alpha-bisabolol, epi-alpha-bisabolol and cis-farnesol. This chain is 5-epi-aristolochene synthase (EAS3), found in Nicotiana tabacum (Common tobacco).